Reading from the N-terminus, the 304-residue chain is Opsin-1 (304 aa).

The Extracellular segment spans residues M1–R45. Residues T46–W66 form a helical membrane-spanning segment. The helical transmembrane segment at L74 to A94 threads the bilayer. Residues Y129–V149 form a helical membrane-spanning segment. The chain crosses the membrane as a helical span at residues T154–G174. The helical transmembrane segment at W183 to H203 threads the bilayer. Residues F219 to I239 traverse the membrane as a helical segment. The chain crosses the membrane as a helical span at residues I252–L272. K263 bears the N6-(retinylidene)lysine mark. Residues S273–D304 lie on the Cytoplasmic side of the membrane.

It belongs to the archaeal/bacterial/fungal opsin family. In terms of processing, binds all-trans retinal via a protonated Schiff base linkage.

It localises to the membrane. Its function is as follows. Could facilitate a sensory photoresponse. This is Opsin-1 (nop-1) from Neurospora crassa (strain ATCC 24698 / 74-OR23-1A / CBS 708.71 / DSM 1257 / FGSC 987).